A 428-amino-acid polypeptide reads, in one-letter code: Adenylosuccinate synthetase (428 aa).

Residues Gly-12–Lys-18 and Gly-40–Thr-42 contribute to the GTP site. Residue Asp-13 is the Proton acceptor of the active site. Mg(2+) is bound by residues Asp-13 and Gly-40. IMP contacts are provided by residues Asp-13–Lys-16, Asn-38–His-41, Thr-130, Arg-144, Gln-225, Thr-240, and Arg-304. His-41 acts as the Proton donor in catalysis. Residue Val-300–Arg-306 participates in substrate binding. Residues Arg-306, Lys-332–Asp-334, and Ser-414–Gly-416 each bind GTP.

This sequence belongs to the adenylosuccinate synthetase family. In terms of assembly, homodimer. The cofactor is Mg(2+).

It localises to the cytoplasm. The catalysed reaction is IMP + L-aspartate + GTP = N(6)-(1,2-dicarboxyethyl)-AMP + GDP + phosphate + 2 H(+). Its pathway is purine metabolism; AMP biosynthesis via de novo pathway; AMP from IMP: step 1/2. Plays an important role in the de novo pathway of purine nucleotide biosynthesis. Catalyzes the first committed step in the biosynthesis of AMP from IMP. The protein is Adenylosuccinate synthetase of Clostridium acetobutylicum (strain ATCC 824 / DSM 792 / JCM 1419 / IAM 19013 / LMG 5710 / NBRC 13948 / NRRL B-527 / VKM B-1787 / 2291 / W).